The chain runs to 446 residues: tRNA-2-methylthio-N(6)-dimethylallyladenosine synthase (446 aa).

The 121-residue stretch at 2–122 (KKAYVKSYGC…LPDLLRQSRE (121 aa)) folds into the MTTase N-terminal domain. 6 residues coordinate [4Fe-4S] cluster: cysteine 11, cysteine 47, cysteine 85, cysteine 157, cysteine 161, and cysteine 164. The 233-residue stretch at 143 to 375 (RNRGVTGFLT…QQLLDQQRHA (233 aa)) folds into the Radical SAM core domain. A TRAM domain is found at 378 to 440 (AAAVGTVAEI…SNSLFGEVLE (63 aa)).

The protein belongs to the methylthiotransferase family. MiaB subfamily. In terms of assembly, monomer. It depends on [4Fe-4S] cluster as a cofactor.

The protein localises to the cytoplasm. The enzyme catalyses N(6)-dimethylallyladenosine(37) in tRNA + (sulfur carrier)-SH + AH2 + 2 S-adenosyl-L-methionine = 2-methylsulfanyl-N(6)-dimethylallyladenosine(37) in tRNA + (sulfur carrier)-H + 5'-deoxyadenosine + L-methionine + A + S-adenosyl-L-homocysteine + 2 H(+). Catalyzes the methylthiolation of N6-(dimethylallyl)adenosine (i(6)A), leading to the formation of 2-methylthio-N6-(dimethylallyl)adenosine (ms(2)i(6)A) at position 37 in tRNAs that read codons beginning with uridine. The protein is tRNA-2-methylthio-N(6)-dimethylallyladenosine synthase of Methylorubrum populi (strain ATCC BAA-705 / NCIMB 13946 / BJ001) (Methylobacterium populi).